Consider the following 176-residue polypeptide: NADH-quinone oxidoreductase subunit 10 (176 aa).

5 helical membrane passes run 2 to 22, 26 to 46, 56 to 76, 91 to 111, and 137 to 157; these read SLLEGLALFLLLLSGVLVVTL, IHAALALILNFLVLAGVYVAL, VIVYAGAIVVLFLFVIMLLFA, PLAALLALGVAGILAAGLWGL, and FVLLAVGFLLMAATVVAVALV.

The protein belongs to the complex I subunit 6 family. NDH-1 is composed of 15 different subunits, Nqo1 to Nqo15. The complex has a L-shaped structure, with the hydrophobic arm (subunits Nqo7, Nqo8 and Nqo10 to Nqo14) embedded in the membrane and the hydrophilic peripheral arm (subunits Nqo1 to Nqo6, Nqo9 and Nqo15) protruding into the bacterial cytoplasm. The hydrophilic domain contains all the redox centers.

The protein resides in the cell inner membrane. It catalyses the reaction a quinone + NADH + 5 H(+)(in) = a quinol + NAD(+) + 4 H(+)(out). NDH-1 shuttles electrons from NADH, via FMN and iron-sulfur (Fe-S) centers, to quinones in the respiratory chain. The immediate electron acceptor for the enzyme in this species is menaquinone. Couples the redox reaction to proton translocation (for every two electrons transferred, four hydrogen ions are translocated across the cytoplasmic membrane), and thus conserves the redox energy in a proton gradient required for the synthesis of ATP. The protein is NADH-quinone oxidoreductase subunit 10 (nqo10) of Thermus thermophilus (strain ATCC 27634 / DSM 579 / HB8).